A 358-amino-acid polypeptide reads, in one-letter code: Cytoplasmic tRNA 2-thiolation protein 1 (358 aa).

This sequence belongs to the TtcA family. CTU1/NCS6/ATPBD3 subfamily.

The protein resides in the cytoplasm. It functions in the pathway tRNA modification; 5-methoxycarbonylmethyl-2-thiouridine-tRNA biosynthesis. In terms of biological role, plays a central role in 2-thiolation of mcm(5)S(2)U at tRNA wobble positions of tRNA(Lys), tRNA(Glu) and tRNA(Gln). Directly binds tRNAs and probably acts by catalyzing adenylation of tRNAs, an intermediate required for 2-thiolation. It is unclear whether it acts as a sulfurtransferase that transfers sulfur from thiocarboxylated URM1 onto the uridine of tRNAs at wobble position. Prior mcm(5) tRNA modification by the elongator complex is required for 2-thiolation. May also be involved in protein urmylation. This Candida glabrata (strain ATCC 2001 / BCRC 20586 / JCM 3761 / NBRC 0622 / NRRL Y-65 / CBS 138) (Yeast) protein is Cytoplasmic tRNA 2-thiolation protein 1.